The sequence spans 370 residues: StAR-related lipid transfer protein 7, mitochondrial (370 aa).

The N-terminal 58 residues, 1–58, are a transit peptide targeting the mitochondrion; sequence MLPRRLLAAWLAGTRGGGLLALLANQCRFVTGLRVRRAQQIAQLYGRLYSESSRRVLL. A coiled-coil region spans residues 86-111; that stretch reads DEERIQEEELQRSINEMKRLEEMSNM. Disordered stretches follow at residues 111-138 and 343-370; these read MFQSSGVQHHPPEPKAQTEGNEDSEGKE and MSSEAKATSQSSERKNEGSCGPARIEYA. Residues 112–327 enclose the START domain; the sequence is FQSSGVQHHP…LHMATLKAKN (216 aa).

Post-translationally, proteolytically cleaved by PARL. As to expression, expressed in nasal epithelial cells. Down-regulated in nasal epithelial cells in patients experiencing an asthma exacerbation as compared to stable asthmatics and healthy controls.

It localises to the mitochondrion. May play a protective role in mucosal tissues by preventing exaggerated allergic responses. The chain is StAR-related lipid transfer protein 7, mitochondrial (STARD7) from Homo sapiens (Human).